The primary structure comprises 235 residues: Leucyl/phenylalanyl-tRNA--protein transferase (235 aa).

This sequence belongs to the L/F-transferase family.

It is found in the cytoplasm. It catalyses the reaction N-terminal L-lysyl-[protein] + L-leucyl-tRNA(Leu) = N-terminal L-leucyl-L-lysyl-[protein] + tRNA(Leu) + H(+). The catalysed reaction is N-terminal L-arginyl-[protein] + L-leucyl-tRNA(Leu) = N-terminal L-leucyl-L-arginyl-[protein] + tRNA(Leu) + H(+). The enzyme catalyses L-phenylalanyl-tRNA(Phe) + an N-terminal L-alpha-aminoacyl-[protein] = an N-terminal L-phenylalanyl-L-alpha-aminoacyl-[protein] + tRNA(Phe). In terms of biological role, functions in the N-end rule pathway of protein degradation where it conjugates Leu, Phe and, less efficiently, Met from aminoacyl-tRNAs to the N-termini of proteins containing an N-terminal arginine or lysine. The protein is Leucyl/phenylalanyl-tRNA--protein transferase of Aeromonas hydrophila subsp. hydrophila (strain ATCC 7966 / DSM 30187 / BCRC 13018 / CCUG 14551 / JCM 1027 / KCTC 2358 / NCIMB 9240 / NCTC 8049).